Consider the following 128-residue polypeptide: Lysozyme C-1 (128 aa).

Residues 1–128 (KVYDRCEFAR…VSQYIRGCKL (128 aa)) form the C-type lysozyme domain. Cystine bridges form between Cys-6–Cys-126, Cys-30–Cys-114, Cys-63–Cys-79, and Cys-75–Cys-93. Residues Glu-35 and Asp-51 contribute to the active site.

This sequence belongs to the glycosyl hydrolase 22 family. In terms of assembly, monomer.

Its subcellular location is the secreted. It carries out the reaction Hydrolysis of (1-&gt;4)-beta-linkages between N-acetylmuramic acid and N-acetyl-D-glucosamine residues in a peptidoglycan and between N-acetyl-D-glucosamine residues in chitodextrins.. Its function is as follows. Lysozymes have primarily a bacteriolytic function; those in tissues and body fluids are associated with the monocyte-macrophage system and enhance the activity of immunoagents. The protein is Lysozyme C-1 of Sus scrofa (Pig).